The sequence spans 491 residues: MRVSIPPELVSSLGACDLRVTVRGEGIDKYPGGPGAAKQHARKVAMKLGVSSGLIYLVGKPTINWGDSDQPQPFRQRRYFYYLSGADEPDCYLTYDINNDLLVLYVPDFDLHRAIWMGPTLTTDEAERRFDVDKVRYYASLQSDIQSWVGKYNDAAPVYILHSSQQPQFSVQQLHIDDQRLLPAMDAARVVKDDYELRMIRHANKISGLAHRKVLEQIHKMSNEAQIEGLFLDTCVSHGAKNQAYEIIAGSGPNAATLHYVKNNEPLKGRQLVCLDAGAEWECYASDVTRTFPLAADWPSSHARDVYQIVEEMQEQCIKRIKPGVRFRDLQVLAHDIAIRGLQKLGVLKPGTVEEIRVSGASAIFFPHGLGHHVGLEVHDVSEKPITGMGLPNRPCRPDFIPAMSQSVPLLEEGMVVTIEPGVYFSKLALANSRKLPQARYINFDEAEKYIPIGGVRIEDDILVTRTGYENLTTAPKGDEMLEIIRRGIDN.

Residues D276, D287, E420, and E459 each contribute to the Mn(2+) site.

Belongs to the peptidase M24B family. It depends on Mn(2+) as a cofactor.

It catalyses the reaction Release of any N-terminal amino acid, including proline, that is linked to proline, even from a dipeptide or tripeptide.. Catalyzes the removal of a penultimate prolyl residue from the N-termini of peptides. This chain is Probable Xaa-Pro aminopeptidase An01g13040, found in Aspergillus niger (strain ATCC MYA-4892 / CBS 513.88 / FGSC A1513).